A 73-amino-acid polypeptide reads, in one-letter code: Translation initiation factor IF-1 (73 aa).

Residues 1–73 (MPKKEGVIEI…TRGRIVYRYK (73 aa)) form the S1-like domain.

It belongs to the IF-1 family. As to quaternary structure, component of the 30S ribosomal translation pre-initiation complex which assembles on the 30S ribosome in the order IF-2 and IF-3, IF-1 and N-formylmethionyl-tRNA(fMet); mRNA recruitment can occur at any time during PIC assembly.

The protein resides in the cytoplasm. Its function is as follows. One of the essential components for the initiation of protein synthesis. Stabilizes the binding of IF-2 and IF-3 on the 30S subunit to which N-formylmethionyl-tRNA(fMet) subsequently binds. Helps modulate mRNA selection, yielding the 30S pre-initiation complex (PIC). Upon addition of the 50S ribosomal subunit IF-1, IF-2 and IF-3 are released leaving the mature 70S translation initiation complex. This is Translation initiation factor IF-1 from Nocardioides sp. (strain ATCC BAA-499 / JS614).